The primary structure comprises 275 residues: Elongation factor Ts (275 aa).

The segment at 76-79 (TDFV) is involved in Mg(2+) ion dislocation from EF-Tu.

Belongs to the EF-Ts family.

The protein localises to the cytoplasm. In terms of biological role, associates with the EF-Tu.GDP complex and induces the exchange of GDP to GTP. It remains bound to the aminoacyl-tRNA.EF-Tu.GTP complex up to the GTP hydrolysis stage on the ribosome. The sequence is that of Elongation factor Ts from Corynebacterium kroppenstedtii (strain DSM 44385 / JCM 11950 / CIP 105744 / CCUG 35717).